A 447-amino-acid chain; its full sequence is Phosphatidylinositol N-acetylglucosaminyltransferase subunit A (447 aa).

Topologically, residues 1–387 are cytoplasmic; the sequence is MAEPPKLRVL…NRSLLERLMR (387 aa). The helical transmembrane segment at 388–408 threads the bilayer; the sequence is FLSCGAWAGKLFCMVMILDYL. Residues 409–447 are Lumenal-facing; the sequence is LWRLLQLLQPDEDIEEAPDICLCHHRGVEVSEGLRKKIK.

It belongs to the glycosyltransferase group 1 family. Glycosyltransferase 4 subfamily. Expressed in roots, stems, leaves, flowers and pollen grains.

It is found in the endoplasmic reticulum membrane. The enzyme catalyses a 1,2-diacyl-sn-glycero-3-phospho-(1D-myo-inositol) + UDP-N-acetyl-alpha-D-glucosamine = a 6-(N-acetyl-alpha-D-glucosaminyl)-1-(1,2-diacyl-sn-glycero-3-phospho)-1D-myo-inositol + UDP + H(+). It participates in glycolipid biosynthesis; glycosylphosphatidylinositol-anchor biosynthesis. Necessary for the synthesis of N-acetylglucosaminyl-phosphatidylinositol, the very early intermediate in GPI-anchor biosynthesis. Required for pollen germination and pollen tube growth. The chain is Phosphatidylinositol N-acetylglucosaminyltransferase subunit A from Arabidopsis thaliana (Mouse-ear cress).